Consider the following 432-residue polypeptide: MTVYHFVGIKGTGMSPLAQILHDTGYQVQGSDIEKQIFTQAALEKRNIPIYPFSADNIKPGLTVIAGNAFPDSHPEIAKALAEGIPVIRYHKFLAEYMKKYTSVAVTGAHGKTSTTGLLAHVMQQAKPTSFLIGDGTGRGNESSEYFVFEACEYRRHFLSYQPDYAIMTNIDFDHPDYFANIDDVFDAFQNMALQVNKGIIACGDDEYLPKIHANVPVVYYGTGEENDFQARNIVKNTEGTTFDVFVRNTFYDTFYIPAYGHHNVLNSLAVIALCHYEEIDVNMIKLGLESFGGVKRRFNEKVIGSQVLIDDYAHHPTEIKVTIEAARQKYPEREIIAVFQPHTFTRTQSFLDEFAESLSAADRVYLCDIFGSARENVGKLTITDLQEKIANAELIEENDTSVLKAHEGAVLIFMGAGDIQKYMRAYENVIA.

Residue 108–114 coordinates ATP; sequence GAHGKTS.

This sequence belongs to the MurCDEF family.

It localises to the cytoplasm. The enzyme catalyses UDP-N-acetyl-alpha-D-muramate + L-alanine + ATP = UDP-N-acetyl-alpha-D-muramoyl-L-alanine + ADP + phosphate + H(+). Its pathway is cell wall biogenesis; peptidoglycan biosynthesis. Its function is as follows. Cell wall formation. The chain is UDP-N-acetylmuramate--L-alanine ligase from Bacillus velezensis (strain DSM 23117 / BGSC 10A6 / LMG 26770 / FZB42) (Bacillus amyloliquefaciens subsp. plantarum).